Reading from the N-terminus, the 470-residue chain is Sulfate adenylyltransferase subunit 1 (470 aa).

The tr-type G domain maps to 22 to 238; that stretch reads KELLRFITCG…ETIKIDYAYT (217 aa). Positions 31–38 are G1; sequence GSVDDGKS. Residue 31–38 coordinates GTP; the sequence is GSVDDGKS. A G2 region spans residues 89 to 93; it reads GITID. The segment at 110 to 113 is G3; that stretch reads DTPG. GTP contacts are provided by residues 110–114 and 165–168; these read DTPGH and NKMD. Positions 165 to 168 are G4; sequence NKMD. The segment at 202–204 is G5; sequence SAL.

The protein belongs to the TRAFAC class translation factor GTPase superfamily. Classic translation factor GTPase family. CysN/NodQ subfamily. As to quaternary structure, heterodimer composed of CysD, the smaller subunit, and CysN.

It catalyses the reaction sulfate + ATP + H(+) = adenosine 5'-phosphosulfate + diphosphate. It functions in the pathway sulfur metabolism; hydrogen sulfide biosynthesis; sulfite from sulfate: step 1/3. With CysD forms the ATP sulfurylase (ATPS) that catalyzes the adenylation of sulfate producing adenosine 5'-phosphosulfate (APS) and diphosphate, the first enzymatic step in sulfur assimilation pathway. APS synthesis involves the formation of a high-energy phosphoric-sulfuric acid anhydride bond driven by GTP hydrolysis by CysN coupled to ATP hydrolysis by CysD. The polypeptide is Sulfate adenylyltransferase subunit 1 (Francisella tularensis subsp. tularensis (strain WY96-3418)).